The primary structure comprises 138 residues: Translation initiation factor 5A (138 aa).

Lys-37 carries the post-translational modification Hypusine.

The protein belongs to the eIF-5A family.

The protein resides in the cytoplasm. In terms of biological role, functions by promoting the formation of the first peptide bond. This chain is Translation initiation factor 5A (eIF5A), found in Thermococcus sibiricus (strain DSM 12597 / MM 739).